We begin with the raw amino-acid sequence, 200 residues long: Large ribosomal subunit protein uL4 (200 aa).

The segment at 38–80 (GRQGSKQQKTRSDVSGGGKRPWRQKGTGRARAGTTRGPIWRGG) is disordered.

The protein belongs to the universal ribosomal protein uL4 family. Part of the 50S ribosomal subunit.

Functionally, one of the primary rRNA binding proteins, this protein initially binds near the 5'-end of the 23S rRNA. It is important during the early stages of 50S assembly. It makes multiple contacts with different domains of the 23S rRNA in the assembled 50S subunit and ribosome. Forms part of the polypeptide exit tunnel. In Stutzerimonas stutzeri (strain A1501) (Pseudomonas stutzeri), this protein is Large ribosomal subunit protein uL4.